Consider the following 390-residue polypeptide: Chorismate synthase 2 (390 aa).

2 residues coordinate NADP(+): Arg39 and Arg45. Residues 132-134 (RSS), 253-254 (NA), Gly298, 313-317 (KPIPT), and Arg339 contribute to the FMN site.

It belongs to the chorismate synthase family. Homotetramer. FMNH2 serves as cofactor.

It catalyses the reaction 5-O-(1-carboxyvinyl)-3-phosphoshikimate = chorismate + phosphate. The protein operates within metabolic intermediate biosynthesis; chorismate biosynthesis; chorismate from D-erythrose 4-phosphate and phosphoenolpyruvate: step 7/7. Catalyzes the anti-1,4-elimination of the C-3 phosphate and the C-6 proR hydrogen from 5-enolpyruvylshikimate-3-phosphate (EPSP) to yield chorismate, which is the branch point compound that serves as the starting substrate for the three terminal pathways of aromatic amino acid biosynthesis. This reaction introduces a second double bond into the aromatic ring system. In Bacillus cereus (strain ATCC 14579 / DSM 31 / CCUG 7414 / JCM 2152 / NBRC 15305 / NCIMB 9373 / NCTC 2599 / NRRL B-3711), this protein is Chorismate synthase 2.